The sequence spans 522 residues: Glucans biosynthesis protein G (522 aa).

Positions 1–33 (MPNNKFFVKSSKASLRWLGATVLLTLYALPSWA) are cleaved as a signal peptide.

Belongs to the OpgD/OpgG family.

The protein localises to the periplasm. It functions in the pathway glycan metabolism; osmoregulated periplasmic glucan (OPG) biosynthesis. Functionally, involved in the biosynthesis of osmoregulated periplasmic glucans (OPGs). The polypeptide is Glucans biosynthesis protein G (Sodalis glossinidius (strain morsitans)).